Here is a 140-residue protein sequence, read N- to C-terminus: Small ribosomal subunit protein uS11 (140 aa).

The tract at residues 116-140 (GRVEDVTPIPHDGTRPKGGRRGRRV) is disordered.

Belongs to the universal ribosomal protein uS11 family. In terms of assembly, part of the 30S ribosomal subunit.

Functionally, located on the platform of the 30S subunit. This chain is Small ribosomal subunit protein uS11, found in Thermococcus kodakarensis (strain ATCC BAA-918 / JCM 12380 / KOD1) (Pyrococcus kodakaraensis (strain KOD1)).